Here is a 183-residue protein sequence, read N- to C-terminus: dCTP deaminase (183 aa).

Residues R97–R102 and D113 each bind dCTP. The active-site Proton donor/acceptor is the E123. Residues Y155 and Q162 each coordinate dCTP.

This sequence belongs to the dCTP deaminase family. As to quaternary structure, homotrimer.

It catalyses the reaction dCTP + H2O + H(+) = dUTP + NH4(+). It participates in pyrimidine metabolism; dUMP biosynthesis; dUMP from dCTP (dUTP route): step 1/2. Catalyzes the deamination of dCTP to dUTP. This chain is dCTP deaminase, found in Sulfurisphaera tokodaii (strain DSM 16993 / JCM 10545 / NBRC 100140 / 7) (Sulfolobus tokodaii).